We begin with the raw amino-acid sequence, 333 residues long: DNA-directed RNA polymerase subunit alpha (333 aa).

Positions 1 to 234 (MQSSVNEFLT…QQLAAFVDLK (234 aa)) are alpha N-terminal domain (alpha-NTD). The segment at 248–333 (IDPILLRPVD…SLKKDDKATA (86 aa)) is alpha C-terminal domain (alpha-CTD).

The protein belongs to the RNA polymerase alpha chain family. Homodimer. The RNAP catalytic core consists of 2 alpha, 1 beta, 1 beta' and 1 omega subunit. When a sigma factor is associated with the core the holoenzyme is formed, which can initiate transcription.

It carries out the reaction RNA(n) + a ribonucleoside 5'-triphosphate = RNA(n+1) + diphosphate. Functionally, DNA-dependent RNA polymerase catalyzes the transcription of DNA into RNA using the four ribonucleoside triphosphates as substrates. The protein is DNA-directed RNA polymerase subunit alpha of Stutzerimonas stutzeri (strain A1501) (Pseudomonas stutzeri).